Reading from the N-terminus, the 64-residue chain is MDNNTEKFNELAAIADESELNEMLDENITGAGSTIQCVNTTIGTILSVVFDCCPTSACTPPCRF.

Positions 1–31 are cleaved as a propeptide — cleaved by FlvT; that stretch reads MDNNTEKFNELAAIADESELNEMLDENITGA. Positions 33–37 form a cross-link, lanthionine (Ser-Cys); by FlvM2; the sequence is STIQC. Residues threonine 34 and threonine 41 each carry the 2,3-didehydrobutyrine; by FlvM2 modification. 3 cross-links (beta-methyllanthionine (Thr-Cys); by FlvM2) span residues 44-52, 55-58, and 59-62; these read TILSVVFDC, TSAC, and TPPC. The lanthionine (Ser-Cys); by FlvM2 cross-link spans 47–53; that stretch reads SVVFDCC.

Contains LL-lanthionine, DL-lanthionine, and DL-beta-methyllanthionine, when coepressed in E.coli with the flavecin synthetase FlvM2.

Its subcellular location is the secreted. Its function is as follows. Lanthionine-containing peptide that does probably not show antibacterial activity, since its analog [+2]Flvbeta.d does not show antibacterial activity against M.luteus. Also does not show antibiotic activity when tested with [Del2]Flvalpha.a, an analog of Flvalpha.a, which is encoded by the same operon than Flvbeta.d. The bactericidal activity of lantibiotics is based on depolarization of energized bacterial cytoplasmic membranes, initiated by the formation of aqueous transmembrane pores. The protein is Lantipeptide Flvbeta.d of Ruminococcus flavefaciens.